An 81-amino-acid chain; its full sequence is ATP synthase subunit c, chloroplastic (81 aa).

2 helical membrane-spanning segments follow: residues 3-23 and 57-77; these read PLIS…ASIG and LAFM…LLFA.

The protein belongs to the ATPase C chain family. In terms of assembly, F-type ATPases have 2 components, F(1) - the catalytic core - and F(0) - the membrane proton channel. F(1) has five subunits: alpha(3), beta(3), gamma(1), delta(1), epsilon(1). F(0) has four main subunits: a(1), b(1), b'(1) and c(10-14). The alpha and beta chains form an alternating ring which encloses part of the gamma chain. F(1) is attached to F(0) by a central stalk formed by the gamma and epsilon chains, while a peripheral stalk is formed by the delta, b and b' chains.

The protein localises to the plastid. Its subcellular location is the chloroplast thylakoid membrane. F(1)F(0) ATP synthase produces ATP from ADP in the presence of a proton or sodium gradient. F-type ATPases consist of two structural domains, F(1) containing the extramembraneous catalytic core and F(0) containing the membrane proton channel, linked together by a central stalk and a peripheral stalk. During catalysis, ATP synthesis in the catalytic domain of F(1) is coupled via a rotary mechanism of the central stalk subunits to proton translocation. In terms of biological role, key component of the F(0) channel; it plays a direct role in translocation across the membrane. A homomeric c-ring of between 10-14 subunits forms the central stalk rotor element with the F(1) delta and epsilon subunits. This Pinus koraiensis (Korean pine) protein is ATP synthase subunit c, chloroplastic.